The following is a 1048-amino-acid chain: Protein argonaute 7 (1048 aa).

Residues 1-14 are compositionally biased toward basic and acidic residues; the sequence is MEGEREGVVAKNED. Disordered stretches follow at residues 1–50 and 121–141; these read MEGE…GSSG and KAADAAPRGSMWKHRPSKKPP. The segment covering 16-37 has biased composition (gly residues); the sequence is AGGGGGGLGTGGNGGGGGGGSA. Over residues 131-141 the composition is skewed to basic residues; the sequence is MWKHRPSKKPP. The PAZ domain occupies 422–530; sequence KRCDFLKDLP…VPMELCVVCE (109 aa). The Piwi domain maps to 709–1017; it reads LLICVMERRH…AAYRGRLYLE (309 aa).

It belongs to the argonaute family. Ago subfamily. Expressed in the reproductive shoot apex.

In terms of biological role, involved in the RNA silencing pathway. May bind to short RNAs such as microRNAs (miRNAs) or short interfering RNAs (siRNAs), and represses the translation of mRNAs which are complementary to them. Regulates shoot apical meristem (SAM) initiation and maintenance and leaf polarization through the trans-acting siRNAS (ta-siRNAs) pathway which probably modulates the expression of the ARF2, ARF3, ARF4, ARF14 and ARF15 genes. The polypeptide is Protein argonaute 7 (AGO7) (Oryza sativa subsp. japonica (Rice)).